Reading from the N-terminus, the 438-residue chain is Methylenetetrahydrofolate--tRNA-(uracil-5-)-methyltransferase TrmFO (438 aa).

An FAD-binding site is contributed by 9 to 14 (GGGLAG).

The protein belongs to the MnmG family. TrmFO subfamily. FAD serves as cofactor.

The protein resides in the cytoplasm. It catalyses the reaction uridine(54) in tRNA + (6R)-5,10-methylene-5,6,7,8-tetrahydrofolate + NADH + H(+) = 5-methyluridine(54) in tRNA + (6S)-5,6,7,8-tetrahydrofolate + NAD(+). The enzyme catalyses uridine(54) in tRNA + (6R)-5,10-methylene-5,6,7,8-tetrahydrofolate + NADPH + H(+) = 5-methyluridine(54) in tRNA + (6S)-5,6,7,8-tetrahydrofolate + NADP(+). In terms of biological role, catalyzes the folate-dependent formation of 5-methyl-uridine at position 54 (M-5-U54) in all tRNAs. The polypeptide is Methylenetetrahydrofolate--tRNA-(uracil-5-)-methyltransferase TrmFO (Lactobacillus johnsonii (strain CNCM I-12250 / La1 / NCC 533)).